Here is a 423-residue protein sequence, read N- to C-terminus: Gamma-glutamyl phosphate reductase (423 aa).

The protein belongs to the gamma-glutamyl phosphate reductase family.

It is found in the cytoplasm. The enzyme catalyses L-glutamate 5-semialdehyde + phosphate + NADP(+) = L-glutamyl 5-phosphate + NADPH + H(+). It functions in the pathway amino-acid biosynthesis; L-proline biosynthesis; L-glutamate 5-semialdehyde from L-glutamate: step 2/2. Its function is as follows. Catalyzes the NADPH-dependent reduction of L-glutamate 5-phosphate into L-glutamate 5-semialdehyde and phosphate. The product spontaneously undergoes cyclization to form 1-pyrroline-5-carboxylate. The sequence is that of Gamma-glutamyl phosphate reductase from Pseudomonas putida (strain GB-1).